The sequence spans 336 residues: uncharacterized protein (336 aa).

An ATP-binding site is contributed by 29 to 36 (GPKSSGKS).

The protein belongs to the archaeal ATPase family.

This is an uncharacterized protein from Methanocaldococcus jannaschii (strain ATCC 43067 / DSM 2661 / JAL-1 / JCM 10045 / NBRC 100440) (Methanococcus jannaschii).